Here is a 187-residue protein sequence, read N- to C-terminus: Shikimate kinase (187 aa).

18 to 23 (GCGKST) contributes to the ATP binding site. Ser-22 contributes to the Mg(2+) binding site. The substrate site is built by Asp-40, Arg-64, and Gly-86. ATP is bound at residue Arg-128. Arg-147 provides a ligand contact to substrate. Arg-164 is an ATP binding site.

Belongs to the shikimate kinase family. In terms of assembly, monomer. It depends on Mg(2+) as a cofactor.

It localises to the cytoplasm. The enzyme catalyses shikimate + ATP = 3-phosphoshikimate + ADP + H(+). It participates in metabolic intermediate biosynthesis; chorismate biosynthesis; chorismate from D-erythrose 4-phosphate and phosphoenolpyruvate: step 5/7. In terms of biological role, catalyzes the specific phosphorylation of the 3-hydroxyl group of shikimic acid using ATP as a cosubstrate. This chain is Shikimate kinase, found in Rhodopirellula baltica (strain DSM 10527 / NCIMB 13988 / SH1).